Consider the following 235-residue polypeptide: Exosome complex component Rrp4 (235 aa).

One can recognise an S1 motif domain in the interval Gly63–Lys137. In terms of domain architecture, KH spans Gly147 to Ile203.

It belongs to the RRP4 family. As to quaternary structure, component of the archaeal exosome complex. Forms a trimer of Rrp4 and/or Csl4 subunits. The trimer associates with a hexameric ring-like arrangement composed of 3 Rrp41-Rrp42 heterodimers.

The protein localises to the cytoplasm. In terms of biological role, non-catalytic component of the exosome, which is a complex involved in RNA degradation. Increases the RNA binding and the efficiency of RNA degradation. Confers strong poly(A) specificity to the exosome. The chain is Exosome complex component Rrp4 from Pyrobaculum aerophilum (strain ATCC 51768 / DSM 7523 / JCM 9630 / CIP 104966 / NBRC 100827 / IM2).